A 171-amino-acid polypeptide reads, in one-letter code: Small ribosomal subunit protein uS4 (171 aa).

In terms of domain architecture, S4 RNA-binding spans 104–168; the sequence is RRLQTIVYKK…SPFKERAEEA (65 aa).

It belongs to the universal ribosomal protein uS4 family. Part of the 30S ribosomal subunit. Contacts protein S5. The interaction surface between S4 and S5 is involved in control of translational fidelity.

Its function is as follows. One of the primary rRNA binding proteins, it binds directly to 16S rRNA where it nucleates assembly of the body of the 30S subunit. Functionally, with S5 and S12 plays an important role in translational accuracy. The chain is Small ribosomal subunit protein uS4 from Aeropyrum pernix (strain ATCC 700893 / DSM 11879 / JCM 9820 / NBRC 100138 / K1).